Consider the following 209-residue polypeptide: Thymidylate kinase (209 aa).

11 to 18 (GPDGAGKT) contacts ATP.

Belongs to the thymidylate kinase family.

The enzyme catalyses dTMP + ATP = dTDP + ADP. Functionally, phosphorylation of dTMP to form dTDP in both de novo and salvage pathways of dTTP synthesis. This chain is Thymidylate kinase, found in Streptococcus thermophilus (strain ATCC BAA-250 / LMG 18311).